Here is a 217-residue protein sequence, read N- to C-terminus: Uracil-DNA glycosylase (217 aa).

Asp62 serves as the catalytic Proton acceptor.

It belongs to the uracil-DNA glycosylase (UDG) superfamily. UNG family.

The protein resides in the cytoplasm. The catalysed reaction is Hydrolyzes single-stranded DNA or mismatched double-stranded DNA and polynucleotides, releasing free uracil.. Functionally, excises uracil residues from the DNA which can arise as a result of misincorporation of dUMP residues by DNA polymerase or due to deamination of cytosine. The chain is Uracil-DNA glycosylase from Streptococcus pyogenes serotype M49 (strain NZ131).